Here is a 256-residue protein sequence, read N- to C-terminus: Acetylglutamate kinase (256 aa).

Residues Gly-40–Gly-41, Arg-62, and Asn-154 each bind substrate.

Belongs to the acetylglutamate kinase family. ArgB subfamily.

The protein resides in the cytoplasm. It carries out the reaction N-acetyl-L-glutamate + ATP = N-acetyl-L-glutamyl 5-phosphate + ADP. It functions in the pathway amino-acid biosynthesis; L-arginine biosynthesis; N(2)-acetyl-L-ornithine from L-glutamate: step 2/4. Catalyzes the ATP-dependent phosphorylation of N-acetyl-L-glutamate. The chain is Acetylglutamate kinase from Staphylococcus aureus (strain bovine RF122 / ET3-1).